A 437-amino-acid polypeptide reads, in one-letter code: Trigger factor (437 aa).

A PPIase FKBP-type domain is found at 165 to 251 (GDLVVIDFKG…LHTIKEKEKI (87 aa)).

It belongs to the FKBP-type PPIase family. Tig subfamily.

Its subcellular location is the cytoplasm. It carries out the reaction [protein]-peptidylproline (omega=180) = [protein]-peptidylproline (omega=0). Involved in protein export. Acts as a chaperone by maintaining the newly synthesized protein in an open conformation. Functions as a peptidyl-prolyl cis-trans isomerase. This is Trigger factor from Nitratiruptor sp. (strain SB155-2).